We begin with the raw amino-acid sequence, 261 residues long: 3-methyl-2-oxobutanoate hydroxymethyltransferase (261 aa).

2 residues coordinate Mg(2+): Asp44 and Asp83. 3-methyl-2-oxobutanoate contacts are provided by residues 44 to 45 (DS), Asp83, and Lys113. Residue Glu115 participates in Mg(2+) binding. Glu183 serves as the catalytic Proton acceptor.

Belongs to the PanB family. Homodecamer; pentamer of dimers. Requires Mg(2+) as cofactor.

It is found in the cytoplasm. The enzyme catalyses 3-methyl-2-oxobutanoate + (6R)-5,10-methylene-5,6,7,8-tetrahydrofolate + H2O = 2-dehydropantoate + (6S)-5,6,7,8-tetrahydrofolate. It functions in the pathway cofactor biosynthesis; (R)-pantothenate biosynthesis; (R)-pantoate from 3-methyl-2-oxobutanoate: step 1/2. In terms of biological role, catalyzes the reversible reaction in which hydroxymethyl group from 5,10-methylenetetrahydrofolate is transferred onto alpha-ketoisovalerate to form ketopantoate. The chain is 3-methyl-2-oxobutanoate hydroxymethyltransferase from Cyanothece sp. (strain PCC 7425 / ATCC 29141).